A 389-amino-acid chain; its full sequence is Aminomethyltransferase (389 aa).

This sequence belongs to the GcvT family. In terms of assembly, the glycine cleavage system is composed of four proteins: P, T, L and H.

The enzyme catalyses N(6)-[(R)-S(8)-aminomethyldihydrolipoyl]-L-lysyl-[protein] + (6S)-5,6,7,8-tetrahydrofolate = N(6)-[(R)-dihydrolipoyl]-L-lysyl-[protein] + (6R)-5,10-methylene-5,6,7,8-tetrahydrofolate + NH4(+). Its function is as follows. The glycine cleavage system catalyzes the degradation of glycine. In Corynebacterium jeikeium (strain K411), this protein is Aminomethyltransferase.